The chain runs to 480 residues: Bifunctional pantoate ligase/cytidylate kinase (480 aa).

A pantoate--beta-alanine ligase region spans residues methionine 1–valine 243. Methionine 4 to histidine 11 contacts ATP. The active-site Proton donor is histidine 11. Glutamine 34 contacts (R)-pantoate. Position 34 (glutamine 34) interacts with beta-alanine. Residue glycine 123–aspartate 126 coordinates ATP. Glutamine 129 is a (R)-pantoate binding site. ATP is bound by residues valine 152 and leucine 160 to arginine 163. The interval phenylalanine 244–glycine 480 is cytidylate kinase.

It in the N-terminal section; belongs to the pantothenate synthetase family. This sequence in the C-terminal section; belongs to the cytidylate kinase family. Type 1 subfamily.

The protein localises to the cytoplasm. It catalyses the reaction (R)-pantoate + beta-alanine + ATP = (R)-pantothenate + AMP + diphosphate + H(+). The catalysed reaction is CMP + ATP = CDP + ADP. It carries out the reaction dCMP + ATP = dCDP + ADP. The protein operates within cofactor biosynthesis; (R)-pantothenate biosynthesis; (R)-pantothenate from (R)-pantoate and beta-alanine: step 1/1. In terms of biological role, catalyzes the condensation of pantoate with beta-alanine in an ATP-dependent reaction via a pantoyl-adenylate intermediate. Functionally, catalyzes the transfer of a phosphate group from ATP to either CMP or dCMP to form CDP or dCDP and ADP, respectively. This chain is Bifunctional pantoate ligase/cytidylate kinase, found in Synechococcus sp. (strain CC9605).